Reading from the N-terminus, the 308-residue chain is Tryptophan 2,3-dioxygenase (308 aa).

Residues 1–37 (MKPPGDNAPAGCPFSGARAAQPAHEAPHVPGDAAGET) form a disordered region. Substrate-binding positions include 77-81 (FIIQH), tyrosine 139, and arginine 143. A heme-binding site is contributed by histidine 266. Threonine 280 lines the substrate pocket.

This sequence belongs to the tryptophan 2,3-dioxygenase family. Homotetramer. Heme is required as a cofactor.

It carries out the reaction L-tryptophan + O2 = N-formyl-L-kynurenine. It functions in the pathway amino-acid degradation; L-tryptophan degradation via kynurenine pathway; L-kynurenine from L-tryptophan: step 1/2. Heme-dependent dioxygenase that catalyzes the oxidative cleavage of the L-tryptophan (L-Trp) pyrrole ring and converts L-tryptophan to N-formyl-L-kynurenine. Catalyzes the oxidative cleavage of the indole moiety. The sequence is that of Tryptophan 2,3-dioxygenase from Burkholderia ambifaria (strain MC40-6).